Consider the following 120-residue polypeptide: Chaperonin GroEL (120 aa).

ATP is bound at residue 23-27; it reads DGTTT.

This sequence belongs to the chaperonin (HSP60) family. Forms a cylinder of 14 subunits composed of two heptameric rings stacked back-to-back. Interacts with the co-chaperonin GroES.

The protein localises to the cytoplasm. It carries out the reaction ATP + H2O + a folded polypeptide = ADP + phosphate + an unfolded polypeptide.. Its function is as follows. Together with its co-chaperonin GroES, plays an essential role in assisting protein folding. The GroEL-GroES system forms a nano-cage that allows encapsulation of the non-native substrate proteins and provides a physical environment optimized to promote and accelerate protein folding. This chain is Chaperonin GroEL, found in Mycobacterium intracellulare.